The following is a 114-amino-acid chain: Large ribosomal subunit protein P1 (114 aa).

Residues Glu55 to Gly114 form a disordered region. A compositionally biased stretch (low complexity) spans Glu56–Gly69. Residues Ser70–Ser105 show a composition bias toward acidic residues.

It belongs to the eukaryotic ribosomal protein P1/P2 family. In terms of assembly, part of the 50S ribosomal subunit. Homodimer, it forms part of the ribosomal stalk which helps the ribosome interact with GTP-bound translation factors. Forms a heptameric uL10/P0(P1)2(P1)2(P1)2 complex, where uL10/P0 forms an elongated spine to which the P1 dimers bind in a sequential fashion.

Forms part of the ribosomal stalk, playing a central role in the interaction of the ribosome with GTP-bound translation factors. The polypeptide is Large ribosomal subunit protein P1 (Halobacterium salinarum (strain ATCC 700922 / JCM 11081 / NRC-1) (Halobacterium halobium)).